The sequence spans 60 residues: Cytotoxin 4 (60 aa).

4 cysteine pairs are disulfide-bonded: Cys-3–Cys-21, Cys-14–Cys-38, Cys-42–Cys-53, and Cys-54–Cys-59.

Belongs to the three-finger toxin family. Short-chain subfamily. Type IA cytotoxin sub-subfamily. In terms of assembly, monomer in solution; Homodimer and oligomer in the presence of negatively charged lipids forming a pore with a size ranging between 20 and 30 Angstroms. Expressed by the venom gland.

The protein localises to the secreted. Its subcellular location is the target cell membrane. In terms of biological role, shows cytolytic activity on many different cells by forming pore in lipid membranes. In vivo, increases heart rate or kills the animal by cardiac arrest. In addition, it binds to heparin with high affinity, interacts with Kv channel-interacting protein 1 (KCNIP1) in a calcium-independent manner, and binds to integrin alpha-V/beta-3 (ITGAV/ITGB3) with moderate affinity. In Naja mossambica (Mozambique spitting cobra), this protein is Cytotoxin 4.